The sequence spans 480 residues: MKVFYVTAECWPFAKTGGLGDVSYALPKELKKEGVDVRVIMPKYSTIPSYLKDQLKEIAVFSVRVGWRNQYCGLLEMELDGVKFYFIDNEFYFRREDERKSIYGYGDDAERYTFFTDAVLEAISRIDFYPDVIHINDWHTGMLPLILKERYATLEGYKNIKTMYTIHNLQYQGVFDKHVLYDILDLPQKYFDNGDIEYYGSINFMKAGINFADKIITVSPTYANEIQTSFYGEQLDGLLRKESGKLKGILNGIDYDLNDPAKDKDIFVHYDVDSINKKVENKLRLQDILGLKKDSSIPLIGIVSRLVSQKGFDLIAYMMPELMREDLQIVVLGTGEHQYQSMFNYYDSNFSDKVSARITFNASLAQQIYAASDMFLMPSLFEPCGIGQMLAMRYGSLPIVRETGGLRDTVTPYNKFTGEGNGFSFKNYNAHEMFFCLKNAIKVFKDKEKWIKLVENAMKTDNSWKKSAKEYIETYRDICD.

Lys15 contacts ADP-alpha-D-glucose.

It belongs to the glycosyltransferase 1 family. Bacterial/plant glycogen synthase subfamily.

The catalysed reaction is [(1-&gt;4)-alpha-D-glucosyl](n) + ADP-alpha-D-glucose = [(1-&gt;4)-alpha-D-glucosyl](n+1) + ADP + H(+). It functions in the pathway glycan biosynthesis; glycogen biosynthesis. In terms of biological role, synthesizes alpha-1,4-glucan chains using ADP-glucose. The polypeptide is Glycogen synthase (Clostridioides difficile (strain 630) (Peptoclostridium difficile)).